Reading from the N-terminus, the 257-residue chain is Uxu operon transcriptional regulator (257 aa).

Residues 8-76 enclose the HTH gntR-type domain; sequence QRPYQEVGAM…RGAGIYVLDN (69 aa). Residues 36–55 constitute a DNA-binding region (H-T-H motif); the sequence is EREIAEMLDVTRTVVREALI.

Its function is as follows. Repressor for the uxuRBA operon. This chain is Uxu operon transcriptional regulator (uxuR), found in Escherichia coli (strain K12).